The primary structure comprises 492 residues: Zinc finger protein 385B (492 aa).

2 Matrin-type zinc fingers span residues Lys-8–Leu-44 and Ile-143–Ala-173. The tract at residues Glu-159–Thr-206 is disordered. Residues Ser-189–Thr-206 show a composition bias toward low complexity. Matrin-type zinc fingers lie at residues Lys-303 to Arg-337 and Phe-371 to Gly-401. A disordered region spans residues Gln-388–Ser-420.

It is found in the nucleus. May play a role in p53/TP53-mediated apoptosis. The protein is Zinc finger protein 385B (znf385b) of Danio rerio (Zebrafish).